Consider the following 291-residue polypeptide: 3-methylcatechol 2,3-dioxygenase (291 aa).

2 VOC domains span residues Arg-5–Gly-119 and Gly-143–Gly-264. Fe cation is bound by residues His-146, His-210, and Glu-260.

This sequence belongs to the extradiol ring-cleavage dioxygenase family. As to quaternary structure, homooctamer. It depends on Fe(2+) as a cofactor.

The enzyme catalyses 3-methylcatechol + O2 = 2-hydroxy-6-oxo-2,4-heptadienoate + H(+). Its pathway is xenobiotic degradation; toluene degradation. This is 3-methylcatechol 2,3-dioxygenase (todE) from Pseudomonas putida (strain ATCC 700007 / DSM 6899 / JCM 31910 / BCRC 17059 / LMG 24140 / F1).